A 349-amino-acid chain; its full sequence is Terpene cyclase rstn5 (349 aa).

5 helical membrane-spanning segments follow: residues 4–24 (LTPL…WGVF), 81–101 (FMVQ…TEGA), 116–136 (GLFS…FWFV), 158–178 (VVPS…FDPF), and 181–201 (GLDL…CISL). Asn-222 carries an N-linked (GlcNAc...) asparagine glycan. Helical transmembrane passes span 228-248 (VAVG…GLTG), 271-291 (LVLL…LLLA), and 309-329 (TLAV…AWAL).

Belongs to the membrane-bound ascI terpene cyclase family.

It is found in the membrane. Its pathway is antifungal biosynthesis. Its function is as follows. Cyclase; part of the gene cluster that mediates the biosynthesis of the tetrahydropyranyl antifungal agent restricticin that acts as an inhibitor of CYP51 and blocks the ergosterol biosynthesis. The highly reducing polyketide synthase rstn3, the short chain dehydrogenase rstn4, the cyclase rstn5, the FAD-dependent monooxygenase rstn6 and the enoylreductase rstn7 are required to generate the first stable intermediate desmethylrestrictinol. Rstn3 with rstn7 biosynthesize the first polyketide chain intermediate that is reduced by rstn4, followed by epoxidation by rstn6 before 6-endo cyclization via epoxide opening by rstn5 leads to desmethylrestrictinol. The methyltransferase rstn1 then catalyzes the C4 O-methylation of desmethylrestrictinol to produce restrictinol, and the nonribosomal peptide synthetase rstn8 catalyzes the C3 esterification of restrictinol with glycine that leads to restricticin. The protein is Terpene cyclase rstn5 of Aspergillus nomiae NRRL (strain ATCC 15546 / NRRL 13137 / CBS 260.88 / M93).